Consider the following 411-residue polypeptide: Dihydrofolate synthase/folylpolyglutamate synthase (411 aa).

53–56 (GKGT) lines the ATP pocket. Residue S77 coordinates Mg(2+). 7,8-dihydropteroate-binding positions include 116 to 119 (TYFE) and 147 to 149 (LDA). A Mg(2+)-binding site is contributed by H167. Positions 283 and 296 each coordinate ATP.

It belongs to the folylpolyglutamate synthase family. Monomer. It depends on Mg(2+) as a cofactor.

It catalyses the reaction 7,8-dihydropteroate + L-glutamate + ATP = 7,8-dihydrofolate + ADP + phosphate + H(+). The catalysed reaction is (6S)-5,6,7,8-tetrahydrofolyl-(gamma-L-Glu)(n) + L-glutamate + ATP = (6S)-5,6,7,8-tetrahydrofolyl-(gamma-L-Glu)(n+1) + ADP + phosphate + H(+). It carries out the reaction 10-formyltetrahydrofolyl-(gamma-L-Glu)(n) + L-glutamate + ATP = 10-formyltetrahydrofolyl-(gamma-L-Glu)(n+1) + ADP + phosphate + H(+). The enzyme catalyses (6R)-5,10-methylenetetrahydrofolyl-(gamma-L-Glu)(n) + L-glutamate + ATP = (6R)-5,10-methylenetetrahydrofolyl-(gamma-L-Glu)(n+1) + ADP + phosphate + H(+). Its pathway is cofactor biosynthesis; tetrahydrofolate biosynthesis; 7,8-dihydrofolate from 2-amino-4-hydroxy-6-hydroxymethyl-7,8-dihydropteridine diphosphate and 4-aminobenzoate: step 2/2. It participates in cofactor biosynthesis; tetrahydrofolylpolyglutamate biosynthesis. Functions in two distinct reactions of the de novo folate biosynthetic pathway. Catalyzes the addition of a glutamate residue to dihydropteroate (7,8-dihydropteroate or H2Pte) to form dihydrofolate (7,8-dihydrofolate monoglutamate or H2Pte-Glu). Also catalyzes successive additions of L-glutamate to tetrahydrofolate or 10-formyltetrahydrofolate or 5,10-methylenetetrahydrofolate, leading to folylpolyglutamate derivatives. This is Dihydrofolate synthase/folylpolyglutamate synthase (folC) from Buchnera aphidicola subsp. Acyrthosiphon pisum (strain APS) (Acyrthosiphon pisum symbiotic bacterium).